Consider the following 95-residue polypeptide: Aspartyl/glutamyl-tRNA(Asn/Gln) amidotransferase subunit C (95 aa).

Belongs to the GatC family. Heterotrimer of A, B and C subunits.

It catalyses the reaction L-glutamyl-tRNA(Gln) + L-glutamine + ATP + H2O = L-glutaminyl-tRNA(Gln) + L-glutamate + ADP + phosphate + H(+). The enzyme catalyses L-aspartyl-tRNA(Asn) + L-glutamine + ATP + H2O = L-asparaginyl-tRNA(Asn) + L-glutamate + ADP + phosphate + 2 H(+). Its function is as follows. Allows the formation of correctly charged Asn-tRNA(Asn) or Gln-tRNA(Gln) through the transamidation of misacylated Asp-tRNA(Asn) or Glu-tRNA(Gln) in organisms which lack either or both of asparaginyl-tRNA or glutaminyl-tRNA synthetases. The reaction takes place in the presence of glutamine and ATP through an activated phospho-Asp-tRNA(Asn) or phospho-Glu-tRNA(Gln). The chain is Aspartyl/glutamyl-tRNA(Asn/Gln) amidotransferase subunit C from Ruegeria sp. (strain TM1040) (Silicibacter sp.).